A 340-amino-acid polypeptide reads, in one-letter code: Zinc finger protein 367 (340 aa).

The segment at 96-140 (LPTLRGAPPSSASVAAVSGGEDEEEASSPDSGHLKDGIRRGRPRA) is disordered. The segment covering 101–114 (GAPPSSASVAAVSG) has biased composition (low complexity). The span at 127–140 (GHLKDGIRRGRPRA) shows a compositional bias: basic and acidic residues. C2H2-type zinc fingers lie at residues 157 to 179 (IRCN…KRTH) and 185 to 209 (YLCD…QRLH). The tract at residues 280 to 317 (KGKLVQKADQEQQDPLEYLQSDEEDDEKSGAQRRLQEQ) is disordered. Positions 299 to 332 (QSDEEDDEKSGAQRRLQEQRERLHGALALIELAN) form a coiled coil. S300 bears the Phosphoserine mark. Basic and acidic residues predominate over residues 307 to 317 (KSGAQRRLQEQ).

The protein belongs to the krueppel C2H2-type zinc-finger protein family.

It is found in the nucleus. Transcriptional activator. May be involved in transcriptional activation of erythroid genes. The polypeptide is Zinc finger protein 367 (Znf367) (Rattus norvegicus (Rat)).